Here is a 148-residue protein sequence, read N- to C-terminus: Cysteine-rich venom protein VAR6 (148 aa).

The N-terminal stretch at 1–22 (MILLKLYLTLAAILCQSRGTTS) is a signal peptide. The SCP domain occupies 41–140 (NKHNDLRRTV…AGVMVGHYTQ (100 aa)).

The protein belongs to the CRISP family. Post-translationally, contains 8 disulfide bonds. Expressed by the venom gland.

It localises to the secreted. Functionally, blocks ryanodine receptors, and potassium channels. In Varanus acanthurus (Ridge-tailed monitor), this protein is Cysteine-rich venom protein VAR6.